Reading from the N-terminus, the 556-residue chain is Formate--tetrahydrofolate ligase (556 aa).

Position 65-72 (T65–S72) interacts with ATP.

Belongs to the formate--tetrahydrofolate ligase family.

The catalysed reaction is (6S)-5,6,7,8-tetrahydrofolate + formate + ATP = (6R)-10-formyltetrahydrofolate + ADP + phosphate. Its pathway is one-carbon metabolism; tetrahydrofolate interconversion. This Streptococcus uberis (strain ATCC BAA-854 / 0140J) protein is Formate--tetrahydrofolate ligase.